The following is a 939-amino-acid chain: cGMP-dependent 3',5'-cyclic phosphodiesterase (939 aa).

Gly-2 carries the N-myristoyl glycine lipid modification. 2 S-palmitoyl cysteine lipidation sites follow: Cys-5 and Cys-11. Positions 16 to 38 (YPAARPAEPRGQQVFLKPDEPPP) are disordered. At Ser-116 the chain carries Phosphoserine. The disordered stretch occupies residues 197–217 (PEAVQNTSVDASEDQKDEKGY). GAF domains are found at residues 236–373 (ATSL…HYTG) and 408–547 (DVSV…GISI). Residues Ser-430, Asp-445, Ile-464, Tyr-487, and Thr-498 each contribute to the 3',5'-cyclic GMP site. Residues 577–901 (SDDEYTKLLH…EHWTKVSHKF (325 aa)) form the PDEase domain. His-655 serves as the catalytic Proton donor. His-659, His-695, Asp-696, and Asp-807 together coordinate Zn(2+). Asp-696 provides a ligand contact to Mg(2+).

It belongs to the cyclic nucleotide phosphodiesterase family. PDE2 subfamily. Homodimer. It depends on Zn(2+) as a cofactor. The cofactor is Mg(2+). Expressed in brain and liver (at protein level).

It localises to the cytoplasm. It is found in the mitochondrion matrix. Its subcellular location is the mitochondrion inner membrane. The protein resides in the mitochondrion outer membrane. The protein localises to the cell membrane. The catalysed reaction is a nucleoside 3',5'-cyclic phosphate + H2O = a nucleoside 5'-phosphate + H(+). The enzyme catalyses 3',5'-cyclic GMP + H2O = GMP + H(+). It catalyses the reaction 3',5'-cyclic AMP + H2O = AMP + H(+). Its activity is regulated as follows. The 3',5'-cyclic-AMP phosphodiesterase activity is stimulated by 3',5'-cyclic GMP. Specifically inhibited by Bay 60-7550. Functionally, cGMP-activated cyclic nucleotide phosphodiesterase with a dual-specificity for the second messengers cAMP and cGMP, which are key regulators of many important physiological processes. Has a higher efficiency with cGMP compared to cAMP. Plays a role in cell growth and migration. Its function is as follows. Regulates mitochondrial cAMP levels and respiration. Involved in the regulation of mitochondria morphology/dynamics and apoptotic cell death via local modulation of cAMP/PKA signaling in the mitochondrion, including the monitoring of local cAMP levels at the outer mitochondrial membrane and of PKA-dependent phosphorylation of DNM1L. The protein is cGMP-dependent 3',5'-cyclic phosphodiesterase of Mus musculus (Mouse).